A 396-amino-acid polypeptide reads, in one-letter code: MAQLLDSPGFIERSAAVPHKAAAAPATRDAAAPAAVPGAAVSFELVGKVFDGPRGPAAALREVTLDIARGGVFGVIGRSGAGKSTLLRLVNGLERPTSGAVRVNGVDVGTLDERGLVALRRRIGMVFQHFNLLSAKTVAQNIGLPLKIAGVPKAERARKVDALLDLVGLAAKRDAYPASLSGGQKQRVGIARALVHDPALLLCDEATSALDPETTQSILALLADINRRLGLTIMLITHEMEVIRAVCDTVAVVEQGEVVETGPVWRVFGDPRHGATRALLRTLVHDLPADLAARVRPLDGAAPLPCGAQLLLDVRYTGASGGEPDLGALTAALARNVGDAVHFVHGGLDRIQGRVQGRLVIAASLAARGAAGPDRIAAALAAARRHANRVEVLGYV.

The region spanning 41–280 (VSFELVGKVF…PRHGATRALL (240 aa)) is the ABC transporter domain. 77 to 84 (GRSGAGKS) serves as a coordination point for ATP.

The protein belongs to the ABC transporter superfamily. Methionine importer (TC 3.A.1.24) family. The complex is composed of two ATP-binding proteins (MetN), two transmembrane proteins (MetI) and a solute-binding protein (MetQ).

Its subcellular location is the cell inner membrane. The catalysed reaction is L-methionine(out) + ATP + H2O = L-methionine(in) + ADP + phosphate + H(+). It catalyses the reaction D-methionine(out) + ATP + H2O = D-methionine(in) + ADP + phosphate + H(+). Part of the ABC transporter complex MetNIQ involved in methionine import. Responsible for energy coupling to the transport system. The chain is Methionine import ATP-binding protein MetN 2 from Burkholderia pseudomallei (strain K96243).